We begin with the raw amino-acid sequence, 406 residues long: Linalool 8-monooxygenase (406 aa).

Heme is bound at residue cysteine 355.

The protein belongs to the cytochrome P450 family. The cofactor is heme.

The enzyme catalyses linalool + 2 reduced [NADPH--hemoprotein reductase] + 2 O2 = (6E)-8-oxolinalool + 2 oxidized [NADPH--hemoprotein reductase] + 3 H2O + 2 H(+). It functions in the pathway terpene metabolism; linalool degradation. Functionally, catalyzes the 8-methyl hydroxylation of linalool. The sequence is that of Linalool 8-monooxygenase (linC) from Pseudomonas putida (Arthrobacter siderocapsulatus).